A 109-amino-acid polypeptide reads, in one-letter code: MSRLNIFLLIIVMGCALSVVNSTNQQRQIFIQLQRAQSQEHQLQQDYAQLQYQQSALSKTSRIEQLATSSLKMQPITTGRTQYLTLSPGAAKAVDVPLPASAAPTGGAR.

Residues 1–3 are Cytoplasmic-facing; it reads MSR. The helical transmembrane segment at 4–21 threads the bilayer; sequence LNIFLLIIVMGCALSVVN. Residues 22–109 are Periplasmic-facing; sequence STNQQRQIFI…ASAAPTGGAR (88 aa).

It belongs to the FtsL family. As to quaternary structure, part of a complex composed of FtsB, FtsL and FtsQ.

The protein resides in the cell inner membrane. Essential cell division protein. May link together the upstream cell division proteins, which are predominantly cytoplasmic, with the downstream cell division proteins, which are predominantly periplasmic. In Burkholderia pseudomallei (strain K96243), this protein is Cell division protein FtsL.